Here is a 266-residue protein sequence, read N- to C-terminus: 3-methyl-2-oxobutanoate hydroxymethyltransferase (266 aa).

Asp-45 and Asp-84 together coordinate Mg(2+). 3-methyl-2-oxobutanoate contacts are provided by residues 45 to 46, Asp-84, and Lys-113; that span reads DS. Glu-115 lines the Mg(2+) pocket. The Proton acceptor role is filled by Glu-183.

It belongs to the PanB family. Homodecamer; pentamer of dimers. Requires Mg(2+) as cofactor.

It localises to the cytoplasm. The catalysed reaction is 3-methyl-2-oxobutanoate + (6R)-5,10-methylene-5,6,7,8-tetrahydrofolate + H2O = 2-dehydropantoate + (6S)-5,6,7,8-tetrahydrofolate. It participates in cofactor biosynthesis; (R)-pantothenate biosynthesis; (R)-pantoate from 3-methyl-2-oxobutanoate: step 1/2. Functionally, catalyzes the reversible reaction in which hydroxymethyl group from 5,10-methylenetetrahydrofolate is transferred onto alpha-ketoisovalerate to form ketopantoate. The sequence is that of 3-methyl-2-oxobutanoate hydroxymethyltransferase from Coxiella burnetii (strain Dugway 5J108-111).